A 170-amino-acid polypeptide reads, in one-letter code: ATP synthase subunit b (170 aa).

Residues 22–44 traverse the membrane as a helical segment; sequence IINLAVVVFGLYKFLPGFLGKIL.

This sequence belongs to the ATPase B chain family. As to quaternary structure, F-type ATPases have 2 components, F(1) - the catalytic core - and F(0) - the membrane proton channel. F(1) has five subunits: alpha(3), beta(3), gamma(1), delta(1), epsilon(1). F(0) has four main subunits: a(1), b(1), b'(1) and c(10-14). The alpha and beta chains form an alternating ring which encloses part of the gamma chain. F(1) is attached to F(0) by a central stalk formed by the gamma and epsilon chains, while a peripheral stalk is formed by the delta, b and b' chains.

It is found in the cellular thylakoid membrane. Functionally, f(1)F(0) ATP synthase produces ATP from ADP in the presence of a proton or sodium gradient. F-type ATPases consist of two structural domains, F(1) containing the extramembraneous catalytic core and F(0) containing the membrane proton channel, linked together by a central stalk and a peripheral stalk. During catalysis, ATP synthesis in the catalytic domain of F(1) is coupled via a rotary mechanism of the central stalk subunits to proton translocation. Component of the F(0) channel, it forms part of the peripheral stalk, linking F(1) to F(0). The sequence is that of ATP synthase subunit b from Prochlorococcus marinus (strain NATL1A).